Consider the following 159-residue polypeptide: Nanos homolog 3 (159 aa).

Positions 42-87 (QEMQSDADSDEQAAALLESPSGPIRSRDSPEQNTSPGGGKPKSSPA) are disordered. The segment at 91–145 (FCSFCKHNGETEAVYTSHYLKNRDGDVMCPYLRQYKCPLCGATGAKAHTKRFCPM) adopts a Nanos-type zinc-finger fold. Zn(2+) is bound by residues Cys92, Cys95, His108, Cys119, Cys127, Cys130, His138, and Cys143. 2 short sequence motifs (C2HC) span residues 92 to 119 (CSFC…DVMC) and 127 to 143 (CPLC…KRFC). Positions 92-159 (CSFCKHNGET…YCSVYAKSTW (68 aa)) are interaction with mylpfa.

This sequence belongs to the nanos family. In terms of assembly, interacts (via C-terminus) with myosin mylpfa/mylz2; the interaction negatively regulates mylpfa phosphorylation. In the embryo, displays early ubiquitous expression before being restricted to primordial germ cells in a 3'-UTR-dependent manner. Expressed in early stage germ cells in larval and adult ovaries.

Its subcellular location is the cytoplasm. It is found in the perinuclear region. Functionally, RNA-binding protein which binds to RNA with no sequence specificity. Probably represses translation of specific mRNAs. Essential for the development of primordial germ cells (PGCs) by ensuring their proper migration and survival but is not required for PGC specification. Also required to maintain oocyte production in the adult ovary. Negatively regulates phosphorylation of myosin mylpfa/mylz2. The sequence is that of Nanos homolog 3 from Danio rerio (Zebrafish).